We begin with the raw amino-acid sequence, 208 residues long: LysM and putative peptidoglycan-binding domain-containing protein 2 (208 aa).

The interval 1–54 is disordered; the sequence is MAEFSPVLPPLRDDGGGGRYGQPLFPRSRSGSESDSELSQSLARTKTRSYGSTA. The segment covering 27-42 has biased composition (low complexity); that stretch reads RSRSGSESDSELSQSL. Positions 65–109 constitute a LysM domain; it reads IEHRVTDGETLQGIALKYGVTMEQIKRVNKLFSNDCIFLRNTLSI. 2 disordered regions span residues 122-169 and 187-208; these read LSLE…EELS and AARKLKEDGGREEDDTNSYQEI. The span at 129–140 shows a compositional bias: polar residues; that stretch reads SEGNTPQESPCV. A compositionally biased stretch (pro residues) spans 147–156; the sequence is PSPPPEPSVP.

This Danio rerio (Zebrafish) protein is LysM and putative peptidoglycan-binding domain-containing protein 2 (lysmd2).